Here is a 337-residue protein sequence, read N- to C-terminus: GTP 3',8-cyclase (337 aa).

The region spanning 17–243 is the Radical SAM core domain; sequence PFQRQYYYLR…HKSHTDGPAK (227 aa). Position 26 (arginine 26) interacts with GTP. Residues cysteine 33 and cysteine 37 each coordinate [4Fe-4S] cluster. Tyrosine 39 provides a ligand contact to S-adenosyl-L-methionine. Cysteine 40 lines the [4Fe-4S] cluster pocket. Arginine 76 lines the GTP pocket. S-adenosyl-L-methionine is bound at residue glycine 80. A GTP-binding site is contributed by threonine 107. An S-adenosyl-L-methionine-binding site is contributed by serine 131. Lysine 168 lines the GTP pocket. S-adenosyl-L-methionine is bound at residue methionine 202. [4Fe-4S] cluster contacts are provided by cysteine 265 and cysteine 268. 270–272 lines the GTP pocket; sequence RLR. Cysteine 282 serves as a coordination point for [4Fe-4S] cluster.

Belongs to the radical SAM superfamily. MoaA family. Monomer and homodimer. [4Fe-4S] cluster serves as cofactor.

It catalyses the reaction GTP + AH2 + S-adenosyl-L-methionine = (8S)-3',8-cyclo-7,8-dihydroguanosine 5'-triphosphate + 5'-deoxyadenosine + L-methionine + A + H(+). Its pathway is cofactor biosynthesis; molybdopterin biosynthesis. Its function is as follows. Catalyzes the cyclization of GTP to (8S)-3',8-cyclo-7,8-dihydroguanosine 5'-triphosphate. This is GTP 3',8-cyclase from Haemophilus influenzae (strain PittGG).